A 237-amino-acid chain; its full sequence is Large ribosomal subunit protein uL2 (237 aa).

The span at 1–11 (MGKRLISQNRG) shows a compositional bias: polar residues. Disordered stretches follow at residues 1 to 26 (MGKR…KRKG) and 204 to 237 (PYGG…SRRT). Basic residues-rich tracts occupy residues 13–26 (GTPK…KRKG) and 228–237 (KVGHIASRRT).

The protein belongs to the universal ribosomal protein uL2 family. In terms of assembly, part of the 50S ribosomal subunit. Forms a bridge to the 30S subunit in the 70S ribosome.

Functionally, one of the primary rRNA binding proteins. Required for association of the 30S and 50S subunits to form the 70S ribosome, for tRNA binding and peptide bond formation. It has been suggested to have peptidyltransferase activity; this is somewhat controversial. Makes several contacts with the 16S rRNA in the 70S ribosome. The polypeptide is Large ribosomal subunit protein uL2 (Methanococcus vannielii).